The following is a 546-amino-acid chain: Glutamyl-tRNA(Gln) amidotransferase subunit A, chloroplastic/mitochondrial (546 aa).

The segment at 21–52 (KRRRFHSSTPLFLSQPQTLASTDPPSSPPQSQ) is disordered. A compositionally biased stretch (polar residues) spans 27-43 (SSTPLFLSQPQTLASTD). Catalysis depends on charge relay system residues Lys123 and Ser198. Residue Ser222 is the Acyl-ester intermediate of the active site.

Belongs to the amidase family. GatA subfamily. Subunit of the heterotrimeric GatCAB amidotransferase (AdT) complex, composed of A, B and C subunits.

The protein resides in the mitochondrion. The protein localises to the plastid. Its subcellular location is the chloroplast stroma. It catalyses the reaction L-glutamyl-tRNA(Gln) + L-glutamine + ATP + H2O = L-glutaminyl-tRNA(Gln) + L-glutamate + ADP + phosphate + H(+). Functionally, allows the formation of correctly charged Gln-tRNA(Gln) through the transamidation of misacylated Glu-tRNA(Gln) in chloroplasts and mitochondria. The reaction takes place in the presence of glutamine and ATP through an activated gamma-phospho-Glu-tRNA(Gln). This is Glutamyl-tRNA(Gln) amidotransferase subunit A, chloroplastic/mitochondrial from Vitis vinifera (Grape).